An 817-amino-acid chain; its full sequence is Trehalose-phosphatase (817 aa).

A glycosyltransferase region spans residues 1 to 547 (MSVYGKIPST…LAATKTDQRI (547 aa)).

It in the N-terminal section; belongs to the glycosyltransferase 20 family. The protein in the C-terminal section; belongs to the trehalose phosphatase family. In terms of assembly, component of the trehalose synthase complex that contains at least tps1, ntp1, and tpp1. Interacts with tps1. Interacts with ntp1. It depends on Mg(2+) as a cofactor.

The catalysed reaction is alpha,alpha-trehalose 6-phosphate + H2O = alpha,alpha-trehalose + phosphate. Its pathway is carbohydrate biosynthesis. Its function is as follows. Phosphatase catalytic subunit of the trehalose synthase complex that catalyzes the production of trehalose from glucose-6-phosphate and UDP-alpha-D-glucose in a two step process. The disaccharide trehalose serves as a storage carbohydrate that is mobilized during nutrient stress and spore germination. Together with ntp1, regulates the level of trehalose as a protectant for cell integrity during thermal, osmotic, and oxidative stress. This chain is Trehalose-phosphatase, found in Schizosaccharomyces pombe (strain 972 / ATCC 24843) (Fission yeast).